We begin with the raw amino-acid sequence, 802 residues long: Cell division cycle 5-like protein (802 aa).

2 consecutive HTH myb-type domains span residues 1 to 56 (MPRI…WLDP) and 57 to 108 (SIKK…DKAA). 2 consecutive DNA-binding regions (H-T-H motif) follow at residues 31–54 (WSRI…YEWL) and 82–104 (WRTI…EFLL). The interval 108 to 143 (AQRDNEEETTDDPRKLKPGEIDPNPETKPARPDPID) is disordered. Basic and acidic residues predominate over residues 118-127 (DDPRKLKPGE). A Glycyl lysine isopeptide (Lys-Gly) (interchain with G-Cter in SUMO2) cross-link involves residue lysine 135. Positions 142–245 (IDMDEDELEM…DADFRKLRQQ (104 aa)) form a coiled coil. The short motif at 165–271 (KKAKRKAREK…KDKQHLKRKK (107 aa)) is the Nuclear localization signal element. Residues 200 to 206 (KKRKKKR) are required for interaction with CTNNBL1. A Glycyl lysine isopeptide (Lys-Gly) (interchain with G-Cter in SUMO2) cross-link involves residue lysine 219. A Phosphothreonine modification is found at threonine 227. The span at 246 to 262 (DLDGELRSEKEGRDRKK) shows a compositional bias: basic and acidic residues. Residues 246–278 (DLDGELRSEKEGRDRKKDKQHLKRKKESDLPSA) form a disordered region. An interaction with PPP1R8 region spans residues 260-606 (RKKDKQHLKR…NKKGKTVGFG (347 aa)). Phosphoserine occurs at positions 303 and 358. Phosphothreonine is present on residues threonine 377, threonine 385, threonine 396, threonine 404, threonine 411, and threonine 415. Residues 409–418 (LSTPFRTPSH) show a composition bias toward polar residues. A disordered region spans residues 409–459 (LSTPFRTPSHGSEGLTPRSGTTPKPVINSTPGRTPLRDKLNINPEDGMADY). Serine 417 bears the Phosphoserine mark. Threonine 424 and threonine 430 each carry phosphothreonine. Over residues 426 to 440 (RSGTTPKPVINSTPG) the composition is skewed to polar residues. At serine 437 the chain carries Phosphoserine. Threonine 438 and threonine 442 each carry phosphothreonine. Residue lysine 487 forms a Glycyl lysine isopeptide (Lys-Gly) (interchain with G-Cter in SUMO2) linkage. The tract at residues 501–659 (ELEEREIDDT…GELSSEAYNQ (159 aa)) is interaction with DAPK3. Coiled coils occupy residues 676-701 (RYTR…INRG) and 764-802 (PRRL…KAKF). The interaction with PLRG1 stretch occupies residues 706–800 (EAKRAAKMEK…LLLEKETLKA (95 aa)).

It belongs to the CEF1 family. Homodimer. Interacts with DAPK3. Component of the precatalytic, catalytic and postcatalytic spliceosome complexes. Part of a spliceosomal 'core' complex consisting of CDC5L, PLRG1, SPF27, CCAP1, CCAP3 and CCAP6. Interacts with PLRG1, Lodestar/TTF2, and NIPP1/PPP1R8. Component of the minor spliceosome, which splices U12-type introns. Within this complex, interacts with SCNM1. Component of the PRP19-CDC5L splicing complex composed of a core complex comprising a homotetramer of PRPF19, CDC5L, PLRG1 and BCAS2, and at least three less stably associated proteins CTNNBL1, CWC15 and HSPA8. Interacts (via its C-terminus) directly in the complex with PRPF19 and BCAS2. Interacts (via its C-terminus) directly with PRGL1 (via its WD40 repeat domain); the interaction is required for mRNA splicing but not for spliceosome assembly. Also interacts with CTNNBL1. Interacts with PRPF19 (via N-terminus). Interacts with USB1. Interacts with DDX41. Post-translationally, phosphorylated on serine and threonine residues. Phosphorylation on Thr-411 and Thr-438 is required for CDC5L-mediated mRNA splicing. Has no effect on subcellular location nor on homodimerization. Phosphorylated in vitro by CDK2. Phosphorylation enhances interaction with PPP1R8.

It is found in the nucleus. Its subcellular location is the nucleus speckle. It localises to the cytoplasm. Functionally, DNA-binding protein involved in cell cycle control. May act as a transcription activator. Plays a role in pre-mRNA splicing as core component of precatalytic, catalytic and postcatalytic spliceosomal complexes. Component of the PRP19-CDC5L complex that forms an integral part of the spliceosome and is required for activating pre-mRNA splicing. The PRP19-CDC5L complex may also play a role in the response to DNA damage (DDR). As a component of the minor spliceosome, involved in the splicing of U12-type introns in pre-mRNAs. This chain is Cell division cycle 5-like protein (CDC5L), found in Bos taurus (Bovine).